The sequence spans 575 residues: Sulfite reductase [NADPH] hemoprotein beta-component (575 aa).

Residues Cys438, Cys444, Cys484, and Cys488 each coordinate [4Fe-4S] cluster. Cys488 contributes to the siroheme binding site.

Belongs to the nitrite and sulfite reductase 4Fe-4S domain family. Alpha(8)-beta(8). The alpha component is a flavoprotein, the beta component is a hemoprotein. Requires siroheme as cofactor. It depends on [4Fe-4S] cluster as a cofactor.

The enzyme catalyses hydrogen sulfide + 3 NADP(+) + 3 H2O = sulfite + 3 NADPH + 4 H(+). Its pathway is sulfur metabolism; hydrogen sulfide biosynthesis; hydrogen sulfide from sulfite (NADPH route): step 1/1. Component of the sulfite reductase complex that catalyzes the 6-electron reduction of sulfite to sulfide. This is one of several activities required for the biosynthesis of L-cysteine from sulfate. The sequence is that of Sulfite reductase [NADPH] hemoprotein beta-component from Vibrio atlanticus (strain LGP32) (Vibrio splendidus (strain Mel32)).